We begin with the raw amino-acid sequence, 281 residues long: Large ribosomal subunit protein uL2 (281 aa).

The tract at residues 215–281 (LGRRPHTRGV…RRNNRKDSKK (67 aa)) is disordered. Over residues 258–269 (KTRDNKSTDKFI) the composition is skewed to basic and acidic residues. The span at 270-281 (VRRRNNRKDSKK) shows a compositional bias: basic residues.

It belongs to the universal ribosomal protein uL2 family. In terms of assembly, part of the 50S ribosomal subunit. Forms a bridge to the 30S subunit in the 70S ribosome.

Functionally, one of the primary rRNA binding proteins. Required for association of the 30S and 50S subunits to form the 70S ribosome, for tRNA binding and peptide bond formation. It has been suggested to have peptidyltransferase activity; this is somewhat controversial. Makes several contacts with the 16S rRNA in the 70S ribosome. This Pelagibacter ubique (strain HTCC1062) protein is Large ribosomal subunit protein uL2.